The following is a 100-amino-acid chain: uncharacterized protein (100 aa).

A coiled-coil region spans residues 65–96; it reads PELSKNWEKLKKEIEQKHKEIQELISEFDNMF.

This is an uncharacterized protein from Acidianus filamentous virus 2 (isolate Italy/Pozzuoli) (AFV-2).